The primary structure comprises 361 residues: Alanine racemase 2 (361 aa).

Residue lysine 30 is the Proton acceptor; specific for D-alanine of the active site. N6-(pyridoxal phosphate)lysine is present on lysine 30. Arginine 122 provides a ligand contact to substrate. The Proton acceptor; specific for L-alanine role is filled by tyrosine 256. A substrate-binding site is contributed by methionine 303.

It belongs to the alanine racemase family. Pyridoxal 5'-phosphate serves as cofactor.

The catalysed reaction is L-alanine = D-alanine. It participates in amino-acid biosynthesis; D-alanine biosynthesis; D-alanine from L-alanine: step 1/1. In terms of biological role, catalyzes the interconversion of L-alanine and D-alanine. May also act on other amino acids. This Staphylococcus aureus (strain COL) protein is Alanine racemase 2 (alr2).